The sequence spans 399 residues: Dual-specificity RNA methyltransferase RlmN (399 aa).

E122 (proton acceptor) is an active-site residue. One can recognise a Radical SAM core domain in the interval 128-371; the sequence is ETDRGTLCVS…VRTPRGRDIL (244 aa). C135 and C374 form a disulfide bridge. Positions 142, 146, and 149 each coordinate [4Fe-4S] cluster. Residues 200 to 201, S232, 254 to 256, and N331 each bind S-adenosyl-L-methionine; these read GE and SLH. Catalysis depends on C374, which acts as the S-methylcysteine intermediate.

It belongs to the radical SAM superfamily. RlmN family. [4Fe-4S] cluster is required as a cofactor.

Its subcellular location is the cytoplasm. The catalysed reaction is adenosine(2503) in 23S rRNA + 2 reduced [2Fe-2S]-[ferredoxin] + 2 S-adenosyl-L-methionine = 2-methyladenosine(2503) in 23S rRNA + 5'-deoxyadenosine + L-methionine + 2 oxidized [2Fe-2S]-[ferredoxin] + S-adenosyl-L-homocysteine. It catalyses the reaction adenosine(37) in tRNA + 2 reduced [2Fe-2S]-[ferredoxin] + 2 S-adenosyl-L-methionine = 2-methyladenosine(37) in tRNA + 5'-deoxyadenosine + L-methionine + 2 oxidized [2Fe-2S]-[ferredoxin] + S-adenosyl-L-homocysteine. Specifically methylates position 2 of adenine 2503 in 23S rRNA and position 2 of adenine 37 in tRNAs. m2A2503 modification seems to play a crucial role in the proofreading step occurring at the peptidyl transferase center and thus would serve to optimize ribosomal fidelity. The polypeptide is Dual-specificity RNA methyltransferase RlmN (Rhodopseudomonas palustris (strain HaA2)).